Consider the following 779-residue polypeptide: Conserved oligomeric Golgi complex subunit 6 (779 aa).

This sequence belongs to the COG6 family.

It is found in the golgi apparatus membrane. Functionally, acts as a component of the peripheral membrane COG complex that is involved in intra-Golgi protein trafficking. COG is located at the cis-Golgi, and regulates tethering of retrograde intra-Golgi vesicles and possibly a number of other membrane trafficking events. This is Conserved oligomeric Golgi complex subunit 6 (COG6) from Kluyveromyces lactis (strain ATCC 8585 / CBS 2359 / DSM 70799 / NBRC 1267 / NRRL Y-1140 / WM37) (Yeast).